The primary structure comprises 322 residues: Quinolinate synthase (322 aa).

Iminosuccinate contacts are provided by histidine 37 and serine 54. Residue cysteine 99 coordinates [4Fe-4S] cluster. Iminosuccinate-binding positions include 125 to 127 and serine 142; that span reads YVN. Cysteine 185 serves as a coordination point for [4Fe-4S] cluster. Residues 211 to 213 and threonine 228 contribute to the iminosuccinate site; that span reads HPE. Residue cysteine 278 coordinates [4Fe-4S] cluster.

This sequence belongs to the quinolinate synthase family. Type 2 subfamily. [4Fe-4S] cluster serves as cofactor.

The protein resides in the cytoplasm. The catalysed reaction is iminosuccinate + dihydroxyacetone phosphate = quinolinate + phosphate + 2 H2O + H(+). The protein operates within cofactor biosynthesis; NAD(+) biosynthesis; quinolinate from iminoaspartate: step 1/1. Catalyzes the condensation of iminoaspartate with dihydroxyacetone phosphate to form quinolinate. This chain is Quinolinate synthase, found in Chlorobaculum tepidum (strain ATCC 49652 / DSM 12025 / NBRC 103806 / TLS) (Chlorobium tepidum).